The primary structure comprises 404 residues: Protein translocase subunit SecD (404 aa).

A run of 6 helical transmembrane segments spans residues 7-27, 239-259, 262-282, 283-303, 330-350, and 357-377; these read HYIW…FNKV, LIAL…PGIV, IALL…GAAL, TLPG…SNVI, FPAI…LFFL, and GFAV…VFVS.

It belongs to the SecD/SecF family. SecD subfamily. As to quaternary structure, forms a complex with SecF. Part of the essential Sec protein translocation apparatus which comprises SecA, SecYEG and auxiliary proteins SecDF. Other proteins may also be involved.

It localises to the cell inner membrane. In terms of biological role, part of the Sec protein translocase complex. Interacts with the SecYEG preprotein conducting channel. SecDF uses the proton motive force (PMF) to complete protein translocation after the ATP-dependent function of SecA. This chain is Protein translocase subunit SecD, found in Leptotrichia buccalis (strain ATCC 14201 / DSM 1135 / JCM 12969 / NCTC 10249 / C-1013-b).